Reading from the N-terminus, the 427-residue chain is CCA-adding enzyme (427 aa).

Ser50 and Lys53 together coordinate ATP. Ser50 and Lys53 together coordinate CTP. Mg(2+)-binding residues include Asp61, Asp63, and Asp112. Residues His135, Lys155, and Tyr164 each contribute to the ATP site. The CTP site is built by His135, Lys155, and Tyr164.

It belongs to the tRNA nucleotidyltransferase/poly(A) polymerase family. Archaeal CCA-adding enzyme subfamily. As to quaternary structure, homodimer. The cofactor is Mg(2+).

It carries out the reaction a tRNA precursor + 2 CTP + ATP = a tRNA with a 3' CCA end + 3 diphosphate. The enzyme catalyses a tRNA with a 3' CCA end + 2 CTP + ATP = a tRNA with a 3' CCACCA end + 3 diphosphate. Its function is as follows. Catalyzes the addition and repair of the essential 3'-terminal CCA sequence in tRNAs without using a nucleic acid template. Adds these three nucleotides in the order of C, C, and A to the tRNA nucleotide-73, using CTP and ATP as substrates and producing inorganic pyrophosphate. tRNA 3'-terminal CCA addition is required both for tRNA processing and repair. Also involved in tRNA surveillance by mediating tandem CCA addition to generate a CCACCA at the 3' terminus of unstable tRNAs. While stable tRNAs receive only 3'-terminal CCA, unstable tRNAs are marked with CCACCA and rapidly degraded. The sequence is that of CCA-adding enzyme from Picrophilus torridus (strain ATCC 700027 / DSM 9790 / JCM 10055 / NBRC 100828 / KAW 2/3).